The primary structure comprises 243 residues: Carboxy-S-adenosyl-L-methionine synthase (243 aa).

Residues tyrosine 40, 65–67 (GCS), 90–91 (DN), 118–119 (DI), asparagine 133, and arginine 200 contribute to the S-adenosyl-L-methionine site.

Belongs to the class I-like SAM-binding methyltransferase superfamily. Cx-SAM synthase family. As to quaternary structure, homodimer.

The enzyme catalyses prephenate + S-adenosyl-L-methionine = carboxy-S-adenosyl-L-methionine + 3-phenylpyruvate + H2O. In terms of biological role, catalyzes the conversion of S-adenosyl-L-methionine (SAM) to carboxy-S-adenosyl-L-methionine (Cx-SAM). This is Carboxy-S-adenosyl-L-methionine synthase from Shewanella amazonensis (strain ATCC BAA-1098 / SB2B).